Here is a 496-residue protein sequence, read N- to C-terminus: MKYQDLRDFIVQLEERGELKRISAPVDTHLEMTEIADRVLRAGGPALLFEQPVTRGVAQAMPVLANLFGTPQRVALGMGEELADGDWQTPLREVGSLLAFLKEPEPPKGFRDAWEKLPVFRQVLNMAPKEVRSAPCQEVVWEGADVDLARLPIQHCWPGDVAPLITWGLVVTRGPGKKRQNLGIYRQQVLSRDRVIMRWLAHRGGALDFRDHQQASSGEAFPVAVVLGCDPATILGAVTPVPDSLSEYQFAGLLRGAKTELVKCMGSDLQVPASAEIVLEGVIHPGDTAAEGPYGDHTGYYNEVSEFPVFTIDRITMRRDPIYHSTYTGKPPDEPAMLGLALNEVFVPLLQRQYPEIVDFYLPPEGCSYRLAVVSIRKQYPGHAKRVMFGIWSFLRQFMYTKFIIVVDDDVAIRDWKEVIWALTTRVDATRDTVLVDNTPIDYLDFASPVASLGSKMGLDATNKWPGETTREWGRPIVMDDVVKARVDAMWDELGL.

Asn181 contributes to the Mn(2+) binding site. Prenylated FMN-binding positions include 184-186, 198-200, and 203-204; these read IYR, RWL, and RG. Position 247 (Glu247) interacts with Mn(2+). The active-site Proton donor is the Asp296.

It belongs to the UbiD family. Homohexamer. It depends on prenylated FMN as a cofactor. Mn(2+) serves as cofactor.

It localises to the cell membrane. It catalyses the reaction a 4-hydroxy-3-(all-trans-polyprenyl)benzoate + H(+) = a 2-(all-trans-polyprenyl)phenol + CO2. Its pathway is cofactor biosynthesis; ubiquinone biosynthesis. Functionally, catalyzes the decarboxylation of 3-octaprenyl-4-hydroxy benzoate to 2-octaprenylphenol, an intermediate step in ubiquinone biosynthesis. The chain is 3-octaprenyl-4-hydroxybenzoate carboxy-lyase from Aromatoleum aromaticum (strain DSM 19018 / LMG 30748 / EbN1) (Azoarcus sp. (strain EbN1)).